The sequence spans 318 residues: Protease HtpX homolog (318 aa).

A run of 3 helical transmembrane segments spans residues 1-21, 35-55, and 56-76; these read MLEA…VGRL, ILGL…GSAI, and AGLV…SRIV. H167 contacts Zn(2+). E168 is an active-site residue. H171 provides a ligand contact to Zn(2+). 2 helical membrane-spanning segments follow: residues 178-198 and 209-229; these read LVMT…DPWL and IAFL…LVAA. E235 contributes to the Zn(2+) binding site.

Belongs to the peptidase M48B family. Zn(2+) serves as cofactor.

The protein resides in the cell membrane. The protein is Protease HtpX homolog of Methanopyrus kandleri (strain AV19 / DSM 6324 / JCM 9639 / NBRC 100938).